The primary structure comprises 100 residues: Urease subunit gamma (100 aa).

This sequence belongs to the urease gamma subunit family. In terms of assembly, heterotrimer of UreA (gamma), UreB (beta) and UreC (alpha) subunits. Three heterotrimers associate to form the active enzyme.

The protein resides in the cytoplasm. The catalysed reaction is urea + 2 H2O + H(+) = hydrogencarbonate + 2 NH4(+). It functions in the pathway nitrogen metabolism; urea degradation; CO(2) and NH(3) from urea (urease route): step 1/1. The sequence is that of Urease subunit gamma from Aliivibrio fischeri (strain ATCC 700601 / ES114) (Vibrio fischeri).